The chain runs to 856 residues: DNA mismatch repair protein MutS (856 aa).

618-625 (GPNMGGKS) is a binding site for ATP.

The protein belongs to the DNA mismatch repair MutS family.

Its function is as follows. This protein is involved in the repair of mismatches in DNA. It is possible that it carries out the mismatch recognition step. This protein has a weak ATPase activity. The protein is DNA mismatch repair protein MutS of Shewanella baltica (strain OS195).